We begin with the raw amino-acid sequence, 127 residues long: Aspartate 1-decarboxylase (127 aa).

The Schiff-base intermediate with substrate; via pyruvic acid role is filled by Ser-25. Ser-25 carries the pyruvic acid (Ser) modification. Thr-57 contacts substrate. Tyr-58 serves as the catalytic Proton donor. 73 to 75 (GAA) lines the substrate pocket.

This sequence belongs to the PanD family. Heterooctamer of four alpha and four beta subunits. Pyruvate is required as a cofactor. In terms of processing, is synthesized initially as an inactive proenzyme, which is activated by self-cleavage at a specific serine bond to produce a beta-subunit with a hydroxyl group at its C-terminus and an alpha-subunit with a pyruvoyl group at its N-terminus.

It localises to the cytoplasm. The catalysed reaction is L-aspartate + H(+) = beta-alanine + CO2. Its pathway is cofactor biosynthesis; (R)-pantothenate biosynthesis; beta-alanine from L-aspartate: step 1/1. In terms of biological role, catalyzes the pyruvoyl-dependent decarboxylation of aspartate to produce beta-alanine. The polypeptide is Aspartate 1-decarboxylase (Staphylococcus aureus (strain JH1)).